A 377-amino-acid chain; its full sequence is MKLRICELVINKTLITKTKIETILETKKKAIQNYAYILHDKDIYQNEKEAQLNGKKVGDIKAPHWHIYLRFNYSQDTKHISQWFNTQENFVSKIKGRFSDALMYMIHANRLDKHQYDEKEVVSNFDWKSEAQQDIFNRKYKMDARLKDILLKIHSGEIKEYNINDNINILENNIYATAIEKAFKFRIRDLKKKVRQMECIFITGLSGSGKSTLAKKIAEDKNYEAYISSGSNDILDDYCGEECIILDDLRSNCLGLSDLLKMLDNNTASSVKSRYKNKVLECQLIIITTVKSIDDFFEDIFRKDESIIQLKRRCKLHIKIDSKYIYYSVWNPIEMKYDLIEKKPNNLLNDFQIKSLSKKEAKDYIKSISNIDLDKDC.

ATP is bound at residue 204 to 211; that stretch reads GLSGSGKS.

This sequence belongs to the Gram-positive plasmids replication protein type 2 family.

In terms of biological role, is essential for plasmid replication. Nicks the positive strand at the plus origin of replication. The polypeptide is Replication protein (rep) (Onion yellows phytoplasma (strain OY-M)).